A 108-amino-acid polypeptide reads, in one-letter code: Phosphoribosyl-ATP pyrophosphatase (108 aa).

Positions 88–108 are disordered; it reads VENELDRREGRSGIEEKASRK. A compositionally biased stretch (basic and acidic residues) spans 91–108; sequence ELDRREGRSGIEEKASRK.

It belongs to the PRA-PH family.

Its subcellular location is the cytoplasm. It carries out the reaction 1-(5-phospho-beta-D-ribosyl)-ATP + H2O = 1-(5-phospho-beta-D-ribosyl)-5'-AMP + diphosphate + H(+). It participates in amino-acid biosynthesis; L-histidine biosynthesis; L-histidine from 5-phospho-alpha-D-ribose 1-diphosphate: step 2/9. The chain is Phosphoribosyl-ATP pyrophosphatase from Paracoccus denitrificans (strain Pd 1222).